The following is a 1641-amino-acid chain: Histone-lysine N-methyltransferase SETD1 (1641 aa).

The segment at 1-23 (MQDVRNINLVNNSSNSHDSSLAN) is disordered. A compositionally biased stretch (low complexity) spans 8 to 23 (NLVNNSSNSHDSSLAN). In terms of domain architecture, RRM spans 101-179 (VEVTIVNLND…KILDVFCDPF (79 aa)). Disordered stretches follow at residues 236–384 (YTTQ…IDQR), 537–596 (APPF…SDEE), 831–915 (RIRK…SSSS), 930–949 (KART…NLNQ), 1119–1155 (QEKR…RKTA), and 1205–1226 (NSKG…SSQA). Residues 244–284 (IPNRSRDRNWNRDKERERDRHFKERSRHSSERSYDRDRGMR) show a composition bias toward basic and acidic residues. Residues 291–300 (IRRRRTFYRR) show a composition bias toward basic residues. 2 stretches are compositionally biased toward basic and acidic residues: residues 308-341 (EDSR…ESFR) and 349-384 (KGRD…IDQR). The span at 556 to 568 (EVFSDVNSDSNNS) shows a compositional bias: low complexity. Composition is skewed to basic and acidic residues over residues 569–579 (ENKKRSCEKNN) and 844–867 (NFLE…KEDS). Low complexity predominate over residues 904 to 915 (SASSFFSSSSSS). 2 stretches are compositionally biased toward basic and acidic residues: residues 930–939 (KARTSEEDSP) and 1119–1128 (QEKRIEKSLD). Residues 1091 to 1132 (SEEEKEYQERRKRNTEYMAQMEREFLEEQEKRIEKSLDKNLQ) are a coiled coil. Polar residues-rich tracts occupy residues 1129-1145 (KNLQ…NSPR) and 1205-1217 (NSKG…QSPV). The RxxxRR motif signature appears at 1473–1478 (RSNQRR). One can recognise an SET domain in the interval 1502 to 1619 (KQLKFAKSAI…INEEITYDYK (118 aa)). Residue tyrosine 1618 participates in S-adenosyl-L-methionine binding. In terms of domain architecture, Post-SET spans 1625–1641 (EKIPCLCGAQGCRGTLN).

The protein belongs to the class V-like SAM-binding methyltransferase superfamily. As to quaternary structure, component of the Set1C/COMPASS complex, composed at least of the catalytic subunit Set1, wds/WDR5, Wdr82, Rbbp5, ash2, Cfp1/CXXC1, hcf and Dpy-30L1.

Its subcellular location is the nucleus. The protein localises to the chromosome. It catalyses the reaction L-lysyl(4)-[histone H3] + 3 S-adenosyl-L-methionine = N(6),N(6),N(6)-trimethyl-L-lysyl(4)-[histone H3] + 3 S-adenosyl-L-homocysteine + 3 H(+). It carries out the reaction N(6)-methyl-L-lysyl(4)-[histone H3] + S-adenosyl-L-methionine = N(6),N(6)-dimethyl-L-lysyl(4)-[histone H3] + S-adenosyl-L-homocysteine + H(+). The enzyme catalyses N(6),N(6)-dimethyl-L-lysyl(4)-[histone H3] + S-adenosyl-L-methionine = N(6),N(6),N(6)-trimethyl-L-lysyl(4)-[histone H3] + S-adenosyl-L-homocysteine + H(+). Its function is as follows. Catalytic component of the COMPASS (Set1C) complex that specifically mono-, di- and trimethylates histone H3 to form H3K4me1/2/3. Binds RNAs which might negatively affect its histone methyltransferase activity. COMPASS recognizes ubiquitinated H2B on one face of the nucleosome which stimulates the methylation of H3 on the opposing face. Set1-dependent trimethylation regulates chromatin changes at active promoters that ensure optimal RNA polymerase II release into productive elongation, thereby contributing to optimal transcription. In Drosophila melanogaster (Fruit fly), this protein is Histone-lysine N-methyltransferase SETD1.